The primary structure comprises 122 residues: Large ribosomal subunit protein uL14c (122 aa).

Belongs to the universal ribosomal protein uL14 family. Part of the 50S ribosomal subunit.

Its subcellular location is the plastid. The protein resides in the chloroplast. In terms of biological role, binds to 23S rRNA. This Chlamydomonas reinhardtii (Chlamydomonas smithii) protein is Large ribosomal subunit protein uL14c.